A 262-amino-acid polypeptide reads, in one-letter code: Pyridoxine 5'-phosphate synthase (262 aa).

3-amino-2-oxopropyl phosphate is bound at residue N6. A 1-deoxy-D-xylulose 5-phosphate-binding site is contributed by 8-9; that stretch reads DH. R17 lines the 3-amino-2-oxopropyl phosphate pocket. Residue H43 is the Proton acceptor of the active site. Positions 45 and 50 each coordinate 1-deoxy-D-xylulose 5-phosphate. Residue E70 is the Proton acceptor of the active site. Residue T102 coordinates 1-deoxy-D-xylulose 5-phosphate. H215 acts as the Proton donor in catalysis. Residues G216 and 237 to 238 contribute to the 3-amino-2-oxopropyl phosphate site; that span reads GH.

Belongs to the PNP synthase family. As to quaternary structure, homooctamer; tetramer of dimers.

It localises to the cytoplasm. It catalyses the reaction 3-amino-2-oxopropyl phosphate + 1-deoxy-D-xylulose 5-phosphate = pyridoxine 5'-phosphate + phosphate + 2 H2O + H(+). It participates in cofactor biosynthesis; pyridoxine 5'-phosphate biosynthesis; pyridoxine 5'-phosphate from D-erythrose 4-phosphate: step 5/5. In terms of biological role, catalyzes the complicated ring closure reaction between the two acyclic compounds 1-deoxy-D-xylulose-5-phosphate (DXP) and 3-amino-2-oxopropyl phosphate (1-amino-acetone-3-phosphate or AAP) to form pyridoxine 5'-phosphate (PNP) and inorganic phosphate. The protein is Pyridoxine 5'-phosphate synthase of Helicobacter pylori (strain G27).